The following is a 141-amino-acid chain: Nucleoside diphosphate kinase (141 aa).

The ATP site is built by K11, F59, R87, T93, R104, and N114. The Pros-phosphohistidine intermediate role is filled by H117.

The protein belongs to the NDK family. Homotetramer. Mg(2+) serves as cofactor.

It is found in the cytoplasm. It carries out the reaction a 2'-deoxyribonucleoside 5'-diphosphate + ATP = a 2'-deoxyribonucleoside 5'-triphosphate + ADP. It catalyses the reaction a ribonucleoside 5'-diphosphate + ATP = a ribonucleoside 5'-triphosphate + ADP. In terms of biological role, major role in the synthesis of nucleoside triphosphates other than ATP. The ATP gamma phosphate is transferred to the NDP beta phosphate via a ping-pong mechanism, using a phosphorylated active-site intermediate. The protein is Nucleoside diphosphate kinase of Bordetella petrii (strain ATCC BAA-461 / DSM 12804 / CCUG 43448).